The following is a 273-amino-acid chain: Giardin subunit beta (273 aa).

The interval 1–19 (MSMFTSTRTLTQTMDKPDD) is nonhelical region. The tract at residues 20 to 273 (LTRSATETAV…GGLSMVTKHQ (254 aa)) is rod. Coiled-coil stretches lie at residues 123–175 (DTLN…YDQL) and 211–263 (NTKL…SKIQ).

This sequence belongs to the SF-assemblin family. As to quaternary structure, interacts with BOP1 (via C-terminal WD repeats).

The protein localises to the cytoplasm. It localises to the cytoskeleton. Giardins are involved in parasite attachment to the intestinal mucosa and in the cytoskeletal disassembly and reassembly that marks the transition from infectious trophozoite to transmissible cyst. They may interact with other cytoskeletal proteins such as microtubules in the microribbons or crossbridges, to maintain the integrity of the ventral disk. This is Giardin subunit beta from Giardia intestinalis (Giardia lamblia).